A 201-amino-acid polypeptide reads, in one-letter code: Recombination protein RecR (201 aa).

The C4-type zinc finger occupies 57–72 (CCDCRTFTEEERCTIC). One can recognise a Toprim domain in the interval 81-176 (GQICVVESPA…AASRIAHGVP (96 aa)).

The protein belongs to the RecR family.

In terms of biological role, may play a role in DNA repair. It seems to be involved in an RecBC-independent recombinational process of DNA repair. It may act with RecF and RecO. The chain is Recombination protein RecR from Proteus mirabilis (strain HI4320).